Reading from the N-terminus, the 801-residue chain is Probable inorganic carbon transporter subunit DabA (801 aa).

4 residues coordinate Zn(2+): C332, D334, H500, and C515.

This sequence belongs to the inorganic carbon transporter (TC 9.A.2) DabA family. As to quaternary structure, forms a complex with DabB. Requires Zn(2+) as cofactor.

Its subcellular location is the cell inner membrane. Its function is as follows. Part of an energy-coupled inorganic carbon pump. The protein is Probable inorganic carbon transporter subunit DabA of Marinobacter nauticus (strain ATCC 700491 / DSM 11845 / VT8) (Marinobacter aquaeolei).